We begin with the raw amino-acid sequence, 562 residues long: Dihydroxy-acid dehydratase (562 aa).

[2Fe-2S] cluster is bound at residue C55. Position 87 (D87) interacts with Mg(2+). C128 serves as a coordination point for [2Fe-2S] cluster. 2 residues coordinate Mg(2+): D129 and K130. An N6-carboxylysine modification is found at K130. C200 provides a ligand contact to [2Fe-2S] cluster. E451 contacts Mg(2+). S477 acts as the Proton acceptor in catalysis.

It belongs to the IlvD/Edd family. Homodimer. It depends on [2Fe-2S] cluster as a cofactor. The cofactor is Mg(2+).

The enzyme catalyses (2R)-2,3-dihydroxy-3-methylbutanoate = 3-methyl-2-oxobutanoate + H2O. It catalyses the reaction (2R,3R)-2,3-dihydroxy-3-methylpentanoate = (S)-3-methyl-2-oxopentanoate + H2O. The protein operates within amino-acid biosynthesis; L-isoleucine biosynthesis; L-isoleucine from 2-oxobutanoate: step 3/4. Its pathway is amino-acid biosynthesis; L-valine biosynthesis; L-valine from pyruvate: step 3/4. Functionally, functions in the biosynthesis of branched-chain amino acids. Catalyzes the dehydration of (2R,3R)-2,3-dihydroxy-3-methylpentanoate (2,3-dihydroxy-3-methylvalerate) into 2-oxo-3-methylpentanoate (2-oxo-3-methylvalerate) and of (2R)-2,3-dihydroxy-3-methylbutanoate (2,3-dihydroxyisovalerate) into 2-oxo-3-methylbutanoate (2-oxoisovalerate), the penultimate precursor to L-isoleucine and L-valine, respectively. The polypeptide is Dihydroxy-acid dehydratase (Cytophaga hutchinsonii (strain ATCC 33406 / DSM 1761 / CIP 103989 / NBRC 15051 / NCIMB 9469 / D465)).